A 94-amino-acid polypeptide reads, in one-letter code: MSNEIVDELYKIILDRIEKRPTGSYTAEIVNKGKPYVARKVGEESVETIVASLAENKERFISEVADLIYHLLVLMALEGVTPEDIYRELERRRK.

Belongs to the PRA-PH family.

The protein localises to the cytoplasm. It catalyses the reaction 1-(5-phospho-beta-D-ribosyl)-ATP + H2O = 1-(5-phospho-beta-D-ribosyl)-5'-AMP + diphosphate + H(+). It functions in the pathway amino-acid biosynthesis; L-histidine biosynthesis; L-histidine from 5-phospho-alpha-D-ribose 1-diphosphate: step 2/9. This chain is Phosphoribosyl-ATP pyrophosphatase (hisE), found in Saccharolobus solfataricus (strain ATCC 35092 / DSM 1617 / JCM 11322 / P2) (Sulfolobus solfataricus).